The primary structure comprises 525 residues: GMP synthase [glutamine-hydrolyzing] (525 aa).

The Glutamine amidotransferase type-1 domain occupies Ser-9–Asp-202. The active-site Nucleophile is the Cys-86. Residues His-176 and Glu-178 contribute to the active site. Residues Trp-203 to Arg-400 enclose the GMPS ATP-PPase domain. Residue Ser-230–Ser-236 coordinates ATP.

Homodimer.

The catalysed reaction is XMP + L-glutamine + ATP + H2O = GMP + L-glutamate + AMP + diphosphate + 2 H(+). It participates in purine metabolism; GMP biosynthesis; GMP from XMP (L-Gln route): step 1/1. In terms of biological role, catalyzes the synthesis of GMP from XMP. In Agrobacterium fabrum (strain C58 / ATCC 33970) (Agrobacterium tumefaciens (strain C58)), this protein is GMP synthase [glutamine-hydrolyzing].